The chain runs to 278 residues: uncharacterized protein (278 aa).

It is found in the cytoplasm. It localises to the nucleus. Probable methyltransferase. This is an uncharacterized protein from Schizosaccharomyces pombe (strain 972 / ATCC 24843) (Fission yeast).